A 565-amino-acid polypeptide reads, in one-letter code: uncharacterized protein (565 aa).

Residues 1-19 form the signal peptide; the sequence is MRWLATFVALLIAISSVSA. Over residues 494 to 504 the composition is skewed to polar residues; it reads TGAENVTNNSV. Residues 494 to 525 form a disordered region; sequence TGAENVTNNSVTATTPPAKASQQTPAPATPPV. A compositionally biased stretch (low complexity) spans 505–519; the sequence is TATTPPAKASQQTPA.

This is an uncharacterized protein from Archaeoglobus fulgidus (strain ATCC 49558 / DSM 4304 / JCM 9628 / NBRC 100126 / VC-16).